Here is a 430-residue protein sequence, read N- to C-terminus: Adenylosuccinate synthetase (430 aa).

GTP is bound by residues 12 to 18 and 40 to 42; these read GDEGKGK and GHT. Catalysis depends on Asp13, which acts as the Proton acceptor. Mg(2+)-binding residues include Asp13 and Gly40. Residues 13-16, 38-41, Thr128, Arg142, Gln223, Thr238, and Arg302 contribute to the IMP site; these read DEGK and NAGH. His41 functions as the Proton donor in the catalytic mechanism. Residue 298 to 304 coordinates substrate; that stretch reads TTTGRPR. Residues Arg304, 330-332, and 412-414 contribute to the GTP site; these read LLD and SVG.

It belongs to the adenylosuccinate synthetase family. Homodimer. Requires Mg(2+) as cofactor.

The protein resides in the cytoplasm. The enzyme catalyses IMP + L-aspartate + GTP = N(6)-(1,2-dicarboxyethyl)-AMP + GDP + phosphate + 2 H(+). The protein operates within purine metabolism; AMP biosynthesis via de novo pathway; AMP from IMP: step 1/2. In terms of biological role, plays an important role in the de novo pathway of purine nucleotide biosynthesis. Catalyzes the first committed step in the biosynthesis of AMP from IMP. The chain is Adenylosuccinate synthetase from Listeria innocua serovar 6a (strain ATCC BAA-680 / CLIP 11262).